Consider the following 814-residue polypeptide: Putative E3 ubiquitin-protein ligase RF298 (814 aa).

Disordered regions lie at residues 1 to 51, 221 to 301, and 411 to 441; these read MVEK…ASLT, SVSN…TKSA, and ALPA…STKP. Positions 221 to 231 are enriched in low complexity; that stretch reads SVSNASKSSES. Polar residues predominate over residues 289-301; that stretch reads SVSTASGEGTKSA. Residues 423–435 are compositionally biased toward basic and acidic residues; that stretch reads SEKKSGSEPEEKP. The stretch at 506–710 forms a coiled coil; the sequence is ELKALRKEKE…KLKSDSLKIA (205 aa). The RING-type zinc-finger motif lies at 760-800; sequence CVMCLSEEMSVIFLPCAHQVLCSKCNQLHEKEAMEDCPSCR.

The protein belongs to the RING-type zinc finger family.

It carries out the reaction S-ubiquitinyl-[E2 ubiquitin-conjugating enzyme]-L-cysteine + [acceptor protein]-L-lysine = [E2 ubiquitin-conjugating enzyme]-L-cysteine + N(6)-ubiquitinyl-[acceptor protein]-L-lysine.. Its pathway is protein modification; protein ubiquitination. The polypeptide is Putative E3 ubiquitin-protein ligase RF298 (RF298) (Arabidopsis thaliana (Mouse-ear cress)).